A 236-amino-acid polypeptide reads, in one-letter code: Small ribosomal subunit protein uS3 (236 aa).

One can recognise a KH type-2 domain in the interval 39–107 (IRLYVLEELK…ETSLNIVEIH (69 aa)). The segment at 216–236 (ERRAAEVDHSGSSSNRRRENA) is disordered.

The protein belongs to the universal ribosomal protein uS3 family. In terms of assembly, part of the 30S ribosomal subunit. Forms a tight complex with proteins S10 and S14.

Binds the lower part of the 30S subunit head. Binds mRNA in the 70S ribosome, positioning it for translation. The protein is Small ribosomal subunit protein uS3 of Bartonella henselae (strain ATCC 49882 / DSM 28221 / CCUG 30454 / Houston 1) (Rochalimaea henselae).